The sequence spans 697 residues: Probable potassium transporter 4 (697 aa).

Residues 1 to 29 (MSSSHTVTVSMDVEAGQKNKDKKGISQDL) lie on the Cytoplasmic side of the membrane. A helical membrane pass occupies residues 30 to 50 (ILAYKTLGVVFGGLVTSPLYV). The Extracellular portion of the chain corresponds to 51–66 (YPSMNLTNPTEEDYLG). N-linked (GlcNAc...) asparagine glycosylation occurs at N55. A helical transmembrane segment spans residues 67–87 (IYSIMFWTLTLIGVVKYICIA). Topologically, residues 88-152 (LNADDHGEGG…FIESSIIARR (65 aa)) are cytoplasmic. The chain crosses the membrane as a helical span at residues 153–173 (LLLLTAILGMCMLIGDGILTP). At 174–189 (AISVLSAIDGLRGPFP) the chain is on the extracellular side. A helical transmembrane segment spans residues 190 to 210 (SVSKPAVEGLSAAILVGLFLL). Residues 211–217 (QKYGTSK) lie on the Cytoplasmic side of the membrane. Residues 218-238 (VSFMFSPIMAAWTFATPVIGV) form a helical membrane-spanning segment. At 239 to 271 (YSIWRYYPGIFKAMSPHYIVRFFMTNQTRGWQL) the chain is on the extracellular side. N264 carries an N-linked (GlcNAc...) asparagine glycan. A helical transmembrane segment spans residues 272–292 (LGGTVLCITGAEAMFADLGHF). The Cytoplasmic portion of the chain corresponds to 293-300 (SKRSIQIA). Residues 301–321 (FMSSIYPSLVLTYAGQTAYLI) form a helical membrane-spanning segment. At 322-338 (NNVDDFSDGFYKFVPRP) the chain is on the extracellular side. Residues 339 to 359 (VYWPMFIIATLAAIVASQSLI) traverse the membrane as a helical segment. The Cytoplasmic segment spans residues 360 to 390 (SATFSVIKQSVVLDYFPRVKVVHTSKDKEGE). Residues 391–411 (VYSPETNYMLMLLCVGVILGF) traverse the membrane as a helical segment. Residues 412–422 (GDGKDIGNAFG) are Extracellular-facing. The chain crosses the membrane as a helical span at residues 423–443 (VVVILVMLITTILLTLVMLII). Residues 444–447 (WGTH) lie on the Cytoplasmic side of the membrane. A helical membrane pass occupies residues 448–468 (VVLVALYLVPFLLLEATYVSA). Residues 469–475 (VCTKILR) are Extracellular-facing. A helical transmembrane segment spans residues 476-496 (GGWVPFAVSVALAAVMFGWYY). At 497-697 (GRQRKTEYEA…RVEIGMLYKA (201 aa)) the chain is on the cytoplasmic side.

The protein belongs to the HAK/KUP transporter (TC 2.A.72.3) family.

The protein resides in the membrane. Its function is as follows. High-affinity potassium transporter. In Oryza sativa subsp. japonica (Rice), this protein is Probable potassium transporter 4 (HAK4).